Consider the following 145-residue polypeptide: MVAFSDKQEALVNGAYEAFKANIPKYSVVFYTTILEKAPAAKNLFSFLANGVDATNPKLTGHAEKLFGLVRDSAAQLRASGGVVADAALGAVHSQKAVNDAQFVVVKEALVKTLKEAVGDKWSDELGTAVELAYDELAAAIKKAY.

Positions 3 to 145 constitute a Globin domain; it reads AFSDKQEALV…ELAAAIKKAY (143 aa). A nitrated tyrosine mark is found at Tyr-26 and Tyr-31. Residue Ser-46 participates in heme b binding. Ser-46 is modified (phosphoserine). His-62 is an O2 binding site. Heme b contacts are provided by Lys-65, His-93, and Lys-96. Tyr-134 carries the post-translational modification Nitrated tyrosine.

Belongs to the plant globin family. In terms of assembly, monomer. Post-translationally, nitrated in effective nodules and particularly in hypoxic conditions; this mechanism may play a protective role in the symbiosis by buffering toxic peroxynitrite NO(2)(-). Nitration level decrease during nodule senescence. Phosphorylation at Ser-46 disrupts the molecular environment of its porphyrin ring oxygen binding pocket, thus leading to a reduced oxygen consumption and to the delivery of oxygen O(2) to symbiosomes. As to expression, root nodules.

It is found in the cytoplasm. It localises to the cytosol. Its subcellular location is the nucleus. Leghemoglobin that reversibly binds oxygen O(2) through a pentacoordinated heme iron. In root nodules, facilitates the diffusion of oxygen to the bacteroids while preventing the bacterial nitrogenase from being inactivated by buffering dioxygen, nitric oxide and carbon monoxide, and promoting the formation of reactive oxygen species (ROS, e.g. H(2)O(2)). This role is essential for symbiotic nitrogen fixation (SNF). This Vigna unguiculata (Cowpea) protein is Leghemoglobin-1.